The chain runs to 443 residues: Tubulin beta-1 chain (443 aa).

Residues Gln11, Glu69, Ser138, Gly142, Thr143, Gly144, Asn204, and Asn226 each contribute to the GTP site. Glu69 serves as a coordination point for Mg(2+). Residues 424-443 (QYQDATAEREGEYEEDYDEA) form a disordered region. The segment covering 434–443 (GEYEEDYDEA) has biased composition (acidic residues).

It belongs to the tubulin family. As to quaternary structure, dimer of alpha and beta chains. A typical microtubule is a hollow water-filled tube with an outer diameter of 25 nm and an inner diameter of 15 nM. Alpha-beta heterodimers associate head-to-tail to form protofilaments running lengthwise along the microtubule wall with the beta-tubulin subunit facing the microtubule plus end conferring a structural polarity. Microtubules usually have 13 protofilaments but different protofilament numbers can be found in some organisms and specialized cells. Requires Mg(2+) as cofactor.

The protein localises to the cytoplasm. The protein resides in the cytoskeleton. Tubulin is the major constituent of microtubules, a cylinder consisting of laterally associated linear protofilaments composed of alpha- and beta-tubulin heterodimers. Microtubules grow by the addition of GTP-tubulin dimers to the microtubule end, where a stabilizing cap forms. Below the cap, tubulin dimers are in GDP-bound state, owing to GTPase activity of alpha-tubulin. The chain is Tubulin beta-1 chain (TUBB1) from Anemia phyllitidis (Fern).